A 212-amino-acid polypeptide reads, in one-letter code: 3-demethoxyubiquinol 3-hydroxylase (212 aa).

Over residues 1–14 the composition is skewed to low complexity; the sequence is MTSPSSRTPRGSTP. Residues 1–22 form a disordered region; the sequence is MTSPSSRTPRGSTPPFEPSADE. 6 residues coordinate Fe cation: E58, E89, H92, E141, E173, and H176.

The protein belongs to the COQ7 family. It depends on Fe cation as a cofactor.

It is found in the cell membrane. It carries out the reaction a 5-methoxy-2-methyl-3-(all-trans-polyprenyl)benzene-1,4-diol + AH2 + O2 = a 3-demethylubiquinol + A + H2O. It functions in the pathway cofactor biosynthesis; ubiquinone biosynthesis. Catalyzes the hydroxylation of 2-nonaprenyl-3-methyl-6-methoxy-1,4-benzoquinol during ubiquinone biosynthesis. The protein is 3-demethoxyubiquinol 3-hydroxylase of Rhodospirillum rubrum (strain ATCC 11170 / ATH 1.1.1 / DSM 467 / LMG 4362 / NCIMB 8255 / S1).